Consider the following 819-residue polypeptide: Ent-beyerene synthase KSL2, chloroplastic (819 aa).

Residues 1–58 constitute a chloroplast transit peptide; the sequence is MLPCLFPAYGSVVACKPSAIDRSPFGLLSQPKQTNRTLIRRPKVTKAFMAIEAMRHCS. The segment covering 58–76 has biased composition (low complexity); that stretch reads SSSSSSEEGGAAATTAARS. The tract at residues 58–77 is disordered; the sequence is SSSSSSEEGGAAATTAARSA. Mg(2+) contacts are provided by D567, D571, N711, S715, and E719. Residues 567-571 carry the DDXXD motif motif; it reads DDFFD.

This sequence belongs to the terpene synthase family. Mg(2+) is required as a cofactor. In terms of tissue distribution, expressed in roots. Highly expressed in stems, flowers and panicle.

The protein resides in the plastid. It localises to the chloroplast. It carries out the reaction ent-copalyl diphosphate = ent-beyerene + diphosphate. The catalysed reaction is ent-copalyl diphosphate = ent-kaur-16-ene + diphosphate. It participates in secondary metabolite biosynthesis; terpenoid biosynthesis. Its function is as follows. Diterpene cyclase involved in jasmonic acid-dependent defense mechanisms in roots by mediating the biosynthesis of labdane-related diterpenoids (LRDs) natural products such as ent-beyerene, an antimicrobial compound. Catalyzes the cyclization of ent-CDP into ent-beyerene as a major and ent-kaurene as a minor product. May be involved in the catalysis of an early step of the gibberellin (GA) biosynthesis pathway. The chain is Ent-beyerene synthase KSL2, chloroplastic from Oryza sativa subsp. japonica (Rice).